We begin with the raw amino-acid sequence, 392 residues long: MASVEEFRNAQRAKGPATILAIGTATPDHCVYQSDYADYYFRVTKSEHMTELKKKFNRICDKSMIKKRYIHLTEEMLEEHPNIGAYMAPSLNIRQEIITAEVPRLGRDAALKALKEWGQPKSKITHLVFCTTSGVEMPGADYKLANLLGLETSVRRVMLYHQGCYAGGTVLRTAKDLAENNAGARVLVVCSEITVVTFRGPSEDALDSLVGQALFGDGSSAVIVGSDPDVSIERPLFQLVSAAQTFIPNSAGAIAGNLREVGLTFHLWPNVPTLISENIEKCLTQAFDPLGISDWNSLFWIAHPGGPAILDAVEAKLNLEKKKLEATRHVLSEYGNMSSACVLFILDEMRKKSLKGEKATTGEGLDWGVLFGFGPGLTIETVVLHSVPTVTN.

Substrate is bound at residue 55–58 (KFNR). Cys-164 is an active-site residue. Substrate-binding positions include Leu-267 and 305–307 (GGP).

This sequence belongs to the thiolase-like superfamily. Chalcone/stilbene synthases family. In terms of assembly, homodimer. In leaves, expressed in palisade and spongy parenchyma cells and, to a lesser extent, in epidermal cells after induction.

It is found in the cytoplasm. The enzyme catalyses 4-coumaroyl-CoA + 3 malonyl-CoA + 3 H(+) = trans-resveratrol + 4 CO2 + 4 CoA. Its pathway is phytoalexin biosynthesis; 3,4',5-trihydroxystilbene biosynthesis; 3,4',5-trihydroxystilbene from trans-4-coumarate: step 2/2. Its function is as follows. Mediates resistance to pathogens which are sensitive to stilbenes such as Botrytis cinerea, Eutypa lata and Plasmopora viticola by enhancing the production of phytoalexins. Confers resistance to Phytophthora palmivora when expressed in papaya. The chain is Stilbene synthase 1 (VINST1) from Vitis vinifera (Grape).